Reading from the N-terminus, the 433-residue chain is Trigger factor (433 aa).

In terms of domain architecture, PPIase FKBP-type spans 163–248 (GDTVNIDFSG…VNEIKFKDVP (86 aa)).

The protein belongs to the FKBP-type PPIase family. Tig subfamily.

It is found in the cytoplasm. It catalyses the reaction [protein]-peptidylproline (omega=180) = [protein]-peptidylproline (omega=0). Functionally, involved in protein export. Acts as a chaperone by maintaining the newly synthesized protein in an open conformation. Functions as a peptidyl-prolyl cis-trans isomerase. The sequence is that of Trigger factor from Staphylococcus epidermidis (strain ATCC 35984 / DSM 28319 / BCRC 17069 / CCUG 31568 / BM 3577 / RP62A).